Reading from the N-terminus, the 303-residue chain is Ribosomal RNA small subunit methyltransferase A (303 aa).

Low complexity predominate over residues 1-19; that stretch reads MSSRPPASFSATFSAARSS. The interval 1-34 is disordered; sequence MSSRPPASFSATFSAARSSKCVPPPRRPSTDVSL. S-adenosyl-L-methionine contacts are provided by His55, Leu57, Gly82, Glu104, Asp130, and Asn149.

The protein belongs to the class I-like SAM-binding methyltransferase superfamily. rRNA adenine N(6)-methyltransferase family. RsmA subfamily.

The protein resides in the cytoplasm. It catalyses the reaction adenosine(1518)/adenosine(1519) in 16S rRNA + 4 S-adenosyl-L-methionine = N(6)-dimethyladenosine(1518)/N(6)-dimethyladenosine(1519) in 16S rRNA + 4 S-adenosyl-L-homocysteine + 4 H(+). Its function is as follows. Specifically dimethylates two adjacent adenosines (A1518 and A1519) in the loop of a conserved hairpin near the 3'-end of 16S rRNA in the 30S particle. May play a critical role in biogenesis of 30S subunits. In Gluconobacter oxydans (strain 621H) (Gluconobacter suboxydans), this protein is Ribosomal RNA small subunit methyltransferase A.